The sequence spans 232 residues: 7-cyano-7-deazaguanine synthase (232 aa).

Residue A11 to A21 participates in ATP binding. Zn(2+) is bound by residues C192, C200, C203, and C206.

It belongs to the QueC family. Requires Zn(2+) as cofactor.

It carries out the reaction 7-carboxy-7-deazaguanine + NH4(+) + ATP = 7-cyano-7-deazaguanine + ADP + phosphate + H2O + H(+). It functions in the pathway purine metabolism; 7-cyano-7-deazaguanine biosynthesis. Functionally, catalyzes the ATP-dependent conversion of 7-carboxy-7-deazaguanine (CDG) to 7-cyano-7-deazaguanine (preQ(0)). This Haloarcula marismortui (strain ATCC 43049 / DSM 3752 / JCM 8966 / VKM B-1809) (Halobacterium marismortui) protein is 7-cyano-7-deazaguanine synthase.